The sequence spans 629 residues: Transferrin (629 aa).

The first 21 residues, 1 to 21 (MTIKNVLKLAALLGVLALVQA), serve as a signal peptide directing secretion. 2 Transferrin-like domains span residues 26–366 (YRMC…ERDG) and 372–621 (MKMC…GLKC). Disulfide bonds link cysteine 29-cysteine 63 and cysteine 38-cysteine 54. Residue tyrosine 111 coordinates Fe(3+). 6 disulfide bridges follow: cysteine 135-cysteine 231, cysteine 184-cysteine 210, cysteine 207-cysteine 216, cysteine 270-cysteine 283, cysteine 375-cysteine 409, and cysteine 385-cysteine 403. Threonine 137, arginine 141, valine 143, and glycine 144 together coordinate hydrogencarbonate. Fe(3+) is bound at residue tyrosine 225. The Fe(3+) site is built by aspartate 408 and histidine 561.

The protein belongs to the transferrin family. As to quaternary structure, monomer.

Functionally, transferrins are iron binding transport proteins which bind Fe(3+) ion in association with the binding of an anion, usually bicarbonate. This transferrin binds only one Fe(3+) ion per protein molecule. Transports iron ions from the hemolymph into the eggs during the vitellogenic stage (oogenesis). In Sarcophaga peregrina (Flesh fly), this protein is Transferrin.